A 350-amino-acid chain; its full sequence is Ion-translocating oxidoreductase complex subunit D (350 aa).

Helical transmembrane passes span 25–45, 89–109, and 124–144; these read ALCLIPGILVQTLFFGFGSLI, IPPLAPWWLVVIGSLFAIIIV, and AMAGYVVLLVSFPLQMTSWVA. An FMN phosphoryl threonine modification is found at T185. 5 helical membrane passes run 212-232, 239-259, 265-285, 298-318, and 319-339; these read SYGVGWFWVNLAYLAGGLVLL, WHISVGILAALFVCASFGFLI, VSPLFHWFSGGTMLAVFFIAT, LIFGASIGIIIYLIRTYGGYP, and DAVAFAVLLANMCAPFIDHYV.

Belongs to the NqrB/RnfD family. In terms of assembly, the complex is composed of six subunits: RnfA, RnfB, RnfC, RnfD, RnfE and RnfG. FMN serves as cofactor.

The protein localises to the cell inner membrane. Its function is as follows. Part of a membrane-bound complex that couples electron transfer with translocation of ions across the membrane. The chain is Ion-translocating oxidoreductase complex subunit D from Shewanella denitrificans (strain OS217 / ATCC BAA-1090 / DSM 15013).